A 312-amino-acid polypeptide reads, in one-letter code: Ribosomal RNA small subunit methyltransferase H (312 aa).

S-adenosyl-L-methionine is bound by residues 33 to 35 (GGH), Asp53, Phe80, Asp101, and Gln108.

This sequence belongs to the methyltransferase superfamily. RsmH family.

The protein localises to the cytoplasm. The catalysed reaction is cytidine(1402) in 16S rRNA + S-adenosyl-L-methionine = N(4)-methylcytidine(1402) in 16S rRNA + S-adenosyl-L-homocysteine + H(+). Specifically methylates the N4 position of cytidine in position 1402 (C1402) of 16S rRNA. This chain is Ribosomal RNA small subunit methyltransferase H, found in Desulfosudis oleivorans (strain DSM 6200 / JCM 39069 / Hxd3) (Desulfococcus oleovorans).